A 121-amino-acid chain; its full sequence is Large ribosomal subunit protein bL12 (121 aa).

The protein belongs to the bacterial ribosomal protein bL12 family. Homodimer. Part of the ribosomal stalk of the 50S ribosomal subunit. Forms a multimeric L10(L12)X complex, where L10 forms an elongated spine to which 2 to 4 L12 dimers bind in a sequential fashion. Binds GTP-bound translation factors.

In terms of biological role, forms part of the ribosomal stalk which helps the ribosome interact with GTP-bound translation factors. Is thus essential for accurate translation. This Alkaliphilus oremlandii (strain OhILAs) (Clostridium oremlandii (strain OhILAs)) protein is Large ribosomal subunit protein bL12.